The following is a 326-amino-acid chain: Nuclear egress protein 1 (326 aa).

The segment at 115–244 (CLSLSGMGYY…YAVFPTKSVH (130 aa)) adopts a CCCH-type zinc-finger fold.

Belongs to the herpesviridae NEC1 protein family. As to quaternary structure, forms a heterohexameric complex with NEC2. Interacts with capsid vertex specific component 2/CVC2; this interaction directs the capsid to the host inner nuclear membrane to initiate budding. Post-translationally, phosphorylated at serine residues in the N-terminus. This phosphorylation regulates the localization within the inner nuclear membrane.

It is found in the host nucleus inner membrane. Functionally, plays an essential role in virion nuclear egress, the first step of virion release from infected cell. Within the host nucleus, NEC1 interacts with the newly formed capsid through the vertexes and directs it to the inner nuclear membrane by associating with NEC2. Induces the budding of the capsid at the inner nuclear membrane as well as its envelopment into the perinuclear space. There, the NEC1/NEC2 complex promotes the fusion of the enveloped capsid with the outer nuclear membrane and the subsequent release of the viral capsid into the cytoplasm where it will reach the secondary budding sites in the host Golgi or trans-Golgi network. This chain is Nuclear egress protein 1, found in Equine herpesvirus 1 (strain Ab4p) (EHV-1).